We begin with the raw amino-acid sequence, 198 residues long: LexA repressor (198 aa).

The H-T-H motif DNA-binding region spans 28-47; that stretch reads IRDIAKHFKLTPRGAHIHVL. Residues S120 and K157 each act as for autocatalytic cleavage activity in the active site.

This sequence belongs to the peptidase S24 family. As to quaternary structure, homodimer.

It catalyses the reaction Hydrolysis of Ala-|-Gly bond in repressor LexA.. Its function is as follows. Represses a number of genes involved in the response to DNA damage (SOS response), including recA and lexA. In the presence of single-stranded DNA, RecA interacts with LexA causing an autocatalytic cleavage which disrupts the DNA-binding part of LexA, leading to derepression of the SOS regulon and eventually DNA repair. In Thermosipho africanus (strain TCF52B), this protein is LexA repressor.